The primary structure comprises 509 residues: Cobyric acid synthase (509 aa).

In terms of domain architecture, GATase cobBQ-type spans 262–459; the sequence is ELKVGIIKLP…IHGIFENDDW (198 aa). Cysteine 343 functions as the Nucleophile in the catalytic mechanism. Histidine 451 is a catalytic residue.

Belongs to the CobB/CobQ family. CobQ subfamily.

It functions in the pathway cofactor biosynthesis; adenosylcobalamin biosynthesis. Catalyzes amidations at positions B, D, E, and G on adenosylcobyrinic A,C-diamide. NH(2) groups are provided by glutamine, and one molecule of ATP is hydrogenolyzed for each amidation. This Prochlorococcus marinus subsp. pastoris (strain CCMP1986 / NIES-2087 / MED4) protein is Cobyric acid synthase.